We begin with the raw amino-acid sequence, 238 residues long: MIKVIFFDLDDTLVDTTKLAELARRNAIENMIRHGLPVDFETAYSELMELIKEYGSNFPHHFDYLLRRLDLPYNPKWVSAGVIAYHNTKFAYLREVPGARKVLIRLRELGYRLGIITDGNPVKQWEKILRLEIDDFFEHVIISDFEGVKKPHPKIFKKALKAFNVDAQEALMVGDRLYSDIYGAKNVGMKTVWFKYGKYSKEELEYREYADYEIEKLQDLLKVIENENGSNKEVHPAR.

Belongs to the HAD-like hydrolase superfamily. Mg(2+) is required as a cofactor.

In terms of biological role, catalyzes the dephosphorylation of D,L-glyceraldehyde 3-phosphate in vitro. This Pyrococcus abyssi (strain GE5 / Orsay) protein is Glyceraldehyde 3-phosphate phosphatase.